The following is a 249-amino-acid chain: DNA polymerase sliding clamp (249 aa).

Belongs to the PCNA family. As to quaternary structure, homotrimer. The subunits circularize to form a toroid; DNA passes through its center. Replication factor C (RFC) is required to load the toroid on the DNA.

Its function is as follows. Sliding clamp subunit that acts as a moving platform for DNA processing. Responsible for tethering the catalytic subunit of DNA polymerase and other proteins to DNA during high-speed replication. The sequence is that of DNA polymerase sliding clamp from Pyrococcus horikoshii (strain ATCC 700860 / DSM 12428 / JCM 9974 / NBRC 100139 / OT-3).